The chain runs to 374 residues: 4-galactosyl-N-acetylglucosaminide 3-alpha-L-fucosyltransferase FUT5 (374 aa).

Over 1-15 (MDLLGAAKPQWPWRR) the chain is Cytoplasmic. Residues 16–34 (CLAGLLFQLLVAVCFFSYL) form a helical; Signal-anchor for type II membrane protein membrane-spanning segment. Residues 35–374 (RVSRDDATGS…TVRSIAAWFN (340 aa)) lie on the Lumenal side of the membrane. 4 N-linked (GlcNAc...) asparagine glycosylation sites follow: Asn60, Asn105, Asn167, and Asn198.

The protein belongs to the glycosyltransferase 10 family.

The protein resides in the golgi apparatus. The protein localises to the golgi stack membrane. It catalyses the reaction a beta-D-galactosyl-(1-&gt;3)-N-acetyl-beta-D-glucosaminyl derivative + GDP-beta-L-fucose = a beta-D-galactosyl-(1-&gt;3)-[alpha-L-fucosyl-(1-&gt;4)]-N-acetyl-beta-D-glucosaminyl derivative + GDP + H(+). It carries out the reaction an N-acetyl-alpha-neuraminyl-(2-&gt;3)-beta-D-galactosyl-(1-&gt;4)-N-acetyl-beta-D-glucosaminyl derivative + GDP-beta-L-fucose = an alpha-Neu5Ac-(2-&gt;3)-beta-D-Gal-(1-&gt;4)-[alpha-L-Fuc-(1-&gt;3)]-beta-D-GlcNAc derivative + GDP + H(+). The enzyme catalyses an alpha-Neu5Ac-(2-&gt;3)-beta-D-Gal-(1-&gt;4)-beta-D-GlcNAc-(1-&gt;3)-beta-D-Gal-(1-&gt;4)-[alpha-L-Fuc-(1-&gt;3)]-beta-D-GlcNAc derivative + GDP-beta-L-fucose = an alpha-Neu5Ac-(2-&gt;3)-beta-D-Gal-(1-&gt;4)-[alpha-L-Fuc-(1-&gt;3)]-beta-D-GlcNAc-(1-&gt;3)-beta-D-Gal-(1-&gt;4)-[alpha-L-Fuc-(1-&gt;3)]-beta-D-GlcNAc derivative + GDP + H(+). The catalysed reaction is a beta-D-galactosyl-(1-&gt;4)-N-acetyl-beta-D-glucosaminyl derivative + GDP-beta-L-fucose = a beta-D-galactosyl-(1-&gt;4)-[alpha-L-fucosyl-(1-&gt;3)]-N-acetyl-beta-D-glucosaminyl derivative + GDP + H(+). It catalyses the reaction a neolactoside nLc4Cer + GDP-beta-L-fucose = a neolactoside III(3)-alpha-Fuc-nLc4Cer + GDP + H(+). It carries out the reaction a neolactoside nLc6Cer + GDP-beta-L-fucose = beta-D-galactosyl-(1-&gt;4)-N-acetyl-beta-D-glucosaminyl-(1-&gt;3)-beta-D-galactosyl-(1-&gt;4)-[alpha-L-fucosyl-(1-&gt;3)]-N-acetyl-beta-D-glucosaminyl-(1-&gt;3)-beta-D-galactosyl-(1-&gt;4)-beta-D-glucosyl-(1&lt;-&gt;1')-ceramide + GDP + H(+). The enzyme catalyses a neolactoside nLc6Cer(d18:1(4E)) + GDP-beta-L-fucose = a neolactoside III(3)-alpha-Fuc-nLc6Cer(d18:1(4E)) + GDP + H(+). The catalysed reaction is a neolactoside nLc4Cer(d18:1(4E)) + GDP-beta-L-fucose = a neolactoside III(3)-alpha-Fuc-nLc4Cer(d18:1(4E)) + GDP + H(+). It catalyses the reaction a neolactoside VI(3)-alpha-NeuNAc-nLc6Cer + GDP-beta-L-fucose = a neolactoside VI(3)-alpha-NeuAc,III(3)-alphaFuc-nLc6Cer + GDP + H(+). It carries out the reaction beta-D-galactosyl-(1-&gt;4)-N-acetyl-D-glucosamine + GDP-beta-L-fucose = beta-D-galactosyl-(1-&gt;4)-[alpha-L-fucosyl-(1-&gt;3)]-N-acetyl-D-glucosamine + GDP + H(+). The enzyme catalyses N-acetyl-alpha-neuraminosyl-(2-&gt;3)-beta-D-galactosyl-(1-&gt;4)-N-acetyl-beta-D-glucosamine + GDP-beta-L-fucose = N-acetyl-alpha-neuraminosyl-(2-&gt;3)-beta-D-galactosyl-(1-&gt;4)-[alpha-L-fucosyl-(1-&gt;3)]-N-acetyl-beta-D-glucosamine + GDP + H(+). The catalysed reaction is alpha-L-Fuc-(1-&gt;2)-beta-D-Gal-(1-&gt;4)-D-GlcNAc + GDP-beta-L-fucose = alpha-L-Fuc-(1-&gt;2)-beta-D-Gal-(1-&gt;4)-[alpha-L-Fuc-(1-&gt;3)]-D-GlcNAc + GDP + H(+). It catalyses the reaction an alpha-Neu5Ac-(2-&gt;3)-beta-D-Gal-(1-&gt;3)-D-GlcNAc derivative + GDP-beta-L-fucose = an alpha-Neu5Ac-(2-&gt;3)-beta-D-Gal-(1-&gt;3)-[alpha-L-Fuc-(1-&gt;4)]-beta-D-GlcNAc derivative + GDP + H(+). Its pathway is protein modification; protein glycosylation. In terms of biological role, catalyzes preferentially the transfer of L-fucose, from a guanosine diphosphate-beta-L-fucose, to the N-acetyl-beta-D-glucosamine (GlcNAc) of an N-acetyllactosamine unit (type 2 chain) of an oligosaccharide, or a glycoprotein- and a glycolipid-linked N-acetyllactosamine unit via an alpha (1,3) linkage and participates in the surface expression of VIM-2, Lewis X/SSEA-1 and sialyl Lewis X antigens. Preferentially transfers fucose to the GlcNAc of an internal N-acetyllactosamine unit of a poly-N-acetyllactosamine chain acceptor substrate. Also catalyzes to a lesser extend the transfer of L-fucose to the GlcNAc of a type 1 (beta-D-galactosyl-(1-&gt;3)-N-acetyl-beta-D-glucosaminyl) or H-type 1 (alpha-L-Fuc-(1-&gt;2)-beta-D-Gal-(1-&gt;3)-D-GlcNAc) chain oligosaccharide via an alpha (1,4) linkage. Preferentially catalyzes sialylated type 2 oligosaccharide acceptors over neutral type 2 or H type 2 (alpha-L-Fuc-(1-&gt;2)-beta-D-Gal-(1-&gt;4)-D-GlcNAc) oligosaccharide acceptors. Lactose-based structures are also acceptor substrates. The protein is 4-galactosyl-N-acetylglucosaminide 3-alpha-L-fucosyltransferase FUT5 of Hylobates lar (Lar gibbon).